The primary structure comprises 476 residues: Glutamate--tRNA ligase (476 aa).

Residues 9–19 (PSPTGTLHIGT) carry the 'HIGH' region motif. Residues 248–252 (KLSKR) carry the 'KMSKS' region motif. K251 provides a ligand contact to ATP.

This sequence belongs to the class-I aminoacyl-tRNA synthetase family. Glutamate--tRNA ligase type 1 subfamily. In terms of assembly, monomer.

The protein resides in the cytoplasm. It carries out the reaction tRNA(Glu) + L-glutamate + ATP = L-glutamyl-tRNA(Glu) + AMP + diphosphate. Catalyzes the attachment of glutamate to tRNA(Glu) in a two-step reaction: glutamate is first activated by ATP to form Glu-AMP and then transferred to the acceptor end of tRNA(Glu). The polypeptide is Glutamate--tRNA ligase (Synechococcus sp. (strain CC9311)).